A 395-amino-acid chain; its full sequence is uncharacterized protein (395 aa).

2 disordered regions span residues 185–282 and 316–372; these read RREV…SSTA and GSST…TCSS. A compositionally biased stretch (basic residues) spans 248 to 257; the sequence is LHLRTRHPHR. Residues 342–360 are compositionally biased toward low complexity; sequence ARASTHSRSSPSASANSRY.

This is an uncharacterized protein from Streptomyces fradiae (Streptomyces roseoflavus).